We begin with the raw amino-acid sequence, 216 residues long: Thiopurine S-methyltransferase (216 aa).

The S-adenosyl-L-methionine site is built by W11, L46, E67, and R122.

The protein belongs to the class I-like SAM-binding methyltransferase superfamily. TPMT family.

It is found in the cytoplasm. It carries out the reaction S-adenosyl-L-methionine + a thiopurine = S-adenosyl-L-homocysteine + a thiopurine S-methylether.. The polypeptide is Thiopurine S-methyltransferase (Vibrio campbellii (strain ATCC BAA-1116)).